Here is a 249-residue protein sequence, read N- to C-terminus: MRVTFPDAKALKKIVPIVADLISEGQFVATEEGIKLVAMDPASIAMVIWEMKPEAFIDYTIEGDKEIITVSMDDLKTIVKKLKQREMVVWETDREKNKLKILARGTIKKTFSIPLLEGEETETPIPSLEYNNVVELDSKAIKEIIDDASAIADSLKFKAEPPSKLIIKAEGEMKEMTVELTEGEDAVVSIDIQEEAYASYSIDYLKKFAKAADVSDIAILKLKTDYPLWLEYRYLDKMTLIFILAPRSD.

Belongs to the PCNA family. As to quaternary structure, homotrimer. The subunits circularize to form a toroid; DNA passes through its center. Replication factor C (RFC) is required to load the toroid on the DNA.

Its function is as follows. Sliding clamp subunit that acts as a moving platform for DNA processing. Responsible for tethering the catalytic subunit of DNA polymerase and other proteins to DNA during high-speed replication. The polypeptide is DNA polymerase sliding clamp (Nanoarchaeum equitans (strain Kin4-M)).